We begin with the raw amino-acid sequence, 355 residues long: 3-dehydroquinate synthase (355 aa).

Residues 106–110 (GVVGD), 130–131 (TS), Lys143, and Lys152 contribute to the NAD(+) site. Glu185, His246, and His262 together coordinate Zn(2+).

Belongs to the sugar phosphate cyclases superfamily. Dehydroquinate synthase family. Requires Co(2+) as cofactor. Zn(2+) serves as cofactor. The cofactor is NAD(+).

The protein resides in the cytoplasm. The catalysed reaction is 7-phospho-2-dehydro-3-deoxy-D-arabino-heptonate = 3-dehydroquinate + phosphate. The protein operates within metabolic intermediate biosynthesis; chorismate biosynthesis; chorismate from D-erythrose 4-phosphate and phosphoenolpyruvate: step 2/7. Catalyzes the conversion of 3-deoxy-D-arabino-heptulosonate 7-phosphate (DAHP) to dehydroquinate (DHQ). The sequence is that of 3-dehydroquinate synthase from Latilactobacillus sakei subsp. sakei (strain 23K) (Lactobacillus sakei subsp. sakei).